We begin with the raw amino-acid sequence, 256 residues long: Proteasome subunit alpha (256 aa).

Residues 235–256 (ELDSNGSDGNGDAPELNGGSSD) form a disordered region.

It belongs to the peptidase T1A family. As to quaternary structure, the 20S proteasome core is composed of 14 alpha and 14 beta subunits that assemble into four stacked heptameric rings, resulting in a barrel-shaped structure. The two inner rings, each composed of seven catalytic beta subunits, are sandwiched by two outer rings, each composed of seven alpha subunits. The catalytic chamber with the active sites is on the inside of the barrel. Has a gated structure, the ends of the cylinder being occluded by the N-termini of the alpha-subunits. Is capped by the proteasome-associated ATPase, ARC.

It is found in the cytoplasm. The protein operates within protein degradation; proteasomal Pup-dependent pathway. The formation of the proteasomal ATPase ARC-20S proteasome complex, likely via the docking of the C-termini of ARC into the intersubunit pockets in the alpha-rings, may trigger opening of the gate for substrate entry. Interconversion between the open-gate and close-gate conformations leads to a dynamic regulation of the 20S proteasome proteolysis activity. In terms of biological role, component of the proteasome core, a large protease complex with broad specificity involved in protein degradation. In Mycolicibacterium paratuberculosis (strain ATCC BAA-968 / K-10) (Mycobacterium paratuberculosis), this protein is Proteasome subunit alpha.